The sequence spans 248 residues: 1-(5-phosphoribosyl)-5-[(5-phosphoribosylamino)methylideneamino] imidazole-4-carboxamide isomerase (248 aa).

Aspartate 7 serves as the catalytic Proton acceptor. Residue aspartate 129 is the Proton donor of the active site.

Belongs to the HisA/HisF family.

The protein localises to the cytoplasm. The enzyme catalyses 1-(5-phospho-beta-D-ribosyl)-5-[(5-phospho-beta-D-ribosylamino)methylideneamino]imidazole-4-carboxamide = 5-[(5-phospho-1-deoxy-D-ribulos-1-ylimino)methylamino]-1-(5-phospho-beta-D-ribosyl)imidazole-4-carboxamide. The protein operates within amino-acid biosynthesis; L-histidine biosynthesis; L-histidine from 5-phospho-alpha-D-ribose 1-diphosphate: step 4/9. The polypeptide is 1-(5-phosphoribosyl)-5-[(5-phosphoribosylamino)methylideneamino] imidazole-4-carboxamide isomerase (Aeromonas salmonicida (strain A449)).